The chain runs to 337 residues: Holliday junction branch migration complex subunit RuvB (337 aa).

The segment at 1–179 (MTHQVAVLHQ…FAFSARLSYY (179 aa)) is large ATPase domain (RuvB-L). ATP contacts are provided by residues Leu-18, Arg-19, Gly-60, Lys-63, Thr-64, Ser-65, 126 to 128 (EDF), Arg-169, Tyr-179, and Arg-216. Thr-64 lines the Mg(2+) pocket. Residues 180–250 (SDQDLKEILV…VAEKALAMLL (71 aa)) form a small ATPAse domain (RuvB-S) region. A head domain (RuvB-H) region spans residues 253 to 337 (DWGLNEIDIK…KNLLSLGEGQ (85 aa)). 2 residues coordinate DNA: Lys-308 and Arg-313.

This sequence belongs to the RuvB family. Homohexamer. Forms an RuvA(8)-RuvB(12)-Holliday junction (HJ) complex. HJ DNA is sandwiched between 2 RuvA tetramers; dsDNA enters through RuvA and exits via RuvB. An RuvB hexamer assembles on each DNA strand where it exits the tetramer. Each RuvB hexamer is contacted by two RuvA subunits (via domain III) on 2 adjacent RuvB subunits; this complex drives branch migration. In the full resolvosome a probable DNA-RuvA(4)-RuvB(12)-RuvC(2) complex forms which resolves the HJ.

The protein resides in the cytoplasm. It carries out the reaction ATP + H2O = ADP + phosphate + H(+). The RuvA-RuvB-RuvC complex processes Holliday junction (HJ) DNA during genetic recombination and DNA repair, while the RuvA-RuvB complex plays an important role in the rescue of blocked DNA replication forks via replication fork reversal (RFR). RuvA specifically binds to HJ cruciform DNA, conferring on it an open structure. The RuvB hexamer acts as an ATP-dependent pump, pulling dsDNA into and through the RuvAB complex. RuvB forms 2 homohexamers on either side of HJ DNA bound by 1 or 2 RuvA tetramers; 4 subunits per hexamer contact DNA at a time. Coordinated motions by a converter formed by DNA-disengaged RuvB subunits stimulates ATP hydrolysis and nucleotide exchange. Immobilization of the converter enables RuvB to convert the ATP-contained energy into a lever motion, pulling 2 nucleotides of DNA out of the RuvA tetramer per ATP hydrolyzed, thus driving DNA branch migration. The RuvB motors rotate together with the DNA substrate, which together with the progressing nucleotide cycle form the mechanistic basis for DNA recombination by continuous HJ branch migration. Branch migration allows RuvC to scan DNA until it finds its consensus sequence, where it cleaves and resolves cruciform DNA. The polypeptide is Holliday junction branch migration complex subunit RuvB (Chlamydia pneumoniae (Chlamydophila pneumoniae)).